Consider the following 444-residue polypeptide: tRNA-2-methylthio-N(6)-dimethylallyladenosine synthase (444 aa).

The MTTase N-terminal domain occupies 2 to 119 (KKLYIRTFGC…LPSMLNEVLT (118 aa)). [4Fe-4S] cluster-binding residues include Cys11, Cys48, Cys82, Cys161, Cys165, and Cys168. The Radical SAM core domain maps to 147–379 (KTSSVTAFVS…QKTIDKNTER (233 aa)). Residues 382 to 444 (KSMVGSVQKI…GNSLVGNLIA (63 aa)) enclose the TRAM domain.

The protein belongs to the methylthiotransferase family. MiaB subfamily. Monomer. The cofactor is [4Fe-4S] cluster.

Its subcellular location is the cytoplasm. The enzyme catalyses N(6)-dimethylallyladenosine(37) in tRNA + (sulfur carrier)-SH + AH2 + 2 S-adenosyl-L-methionine = 2-methylsulfanyl-N(6)-dimethylallyladenosine(37) in tRNA + (sulfur carrier)-H + 5'-deoxyadenosine + L-methionine + A + S-adenosyl-L-homocysteine + 2 H(+). Functionally, catalyzes the methylthiolation of N6-(dimethylallyl)adenosine (i(6)A), leading to the formation of 2-methylthio-N6-(dimethylallyl)adenosine (ms(2)i(6)A) at position 37 in tRNAs that read codons beginning with uridine. The sequence is that of tRNA-2-methylthio-N(6)-dimethylallyladenosine synthase from Ruthia magnifica subsp. Calyptogena magnifica.